A 504-amino-acid polypeptide reads, in one-letter code: Anaerobic nitric oxide reductase transcription regulator NorR (504 aa).

Residue aspartate 57 is modified to 4-aspartylphosphate. A Sigma-54 factor interaction domain is found at methionine 187–valine 416. ATP-binding positions include glycine 215 to glutamate 222 and alanine 278 to glutamate 287. Positions tryptophan 479–lysine 498 form a DNA-binding region, H-T-H motif.

Its pathway is nitrogen metabolism; nitric oxide reduction. Its function is as follows. Required for the expression of anaerobic nitric oxide (NO) reductase, acts as a transcriptional activator for at least the norVW operon. Activation also requires sigma-54. The polypeptide is Anaerobic nitric oxide reductase transcription regulator NorR (Escherichia fergusonii (strain ATCC 35469 / DSM 13698 / CCUG 18766 / IAM 14443 / JCM 21226 / LMG 7866 / NBRC 102419 / NCTC 12128 / CDC 0568-73)).